Reading from the N-terminus, the 325-residue chain is Tetraacyldisaccharide 4'-kinase (325 aa).

55–62 contributes to the ATP binding site; sequence TAGGNGKT.

This sequence belongs to the LpxK family.

It carries out the reaction a lipid A disaccharide + ATP = a lipid IVA + ADP + H(+). Its pathway is glycolipid biosynthesis; lipid IV(A) biosynthesis; lipid IV(A) from (3R)-3-hydroxytetradecanoyl-[acyl-carrier-protein] and UDP-N-acetyl-alpha-D-glucosamine: step 6/6. Its function is as follows. Transfers the gamma-phosphate of ATP to the 4'-position of a tetraacyldisaccharide 1-phosphate intermediate (termed DS-1-P) to form tetraacyldisaccharide 1,4'-bis-phosphate (lipid IVA). This chain is Tetraacyldisaccharide 4'-kinase, found in Salmonella enteritidis PT4 (strain P125109).